The chain runs to 448 residues: Homogentisate 1,2-dioxygenase (448 aa).

Catalysis depends on His-303, which acts as the Proton acceptor. Fe cation is bound by residues His-346 and Glu-352. Residues Tyr-361 and His-382 each coordinate homogentisate. His-382 is a Fe cation binding site.

This sequence belongs to the homogentisate dioxygenase family. As to quaternary structure, hexamer; dimer of trimers. The cofactor is Fe cation.

The catalysed reaction is homogentisate + O2 = 4-maleylacetoacetate + H(+). Its pathway is amino-acid degradation; L-phenylalanine degradation; acetoacetate and fumarate from L-phenylalanine: step 4/6. Involved in the catabolism of homogentisate (2,5-dihydroxyphenylacetate or 2,5-OH-PhAc), a central intermediate in the degradation of phenylalanine and tyrosine. Catalyzes the oxidative ring cleavage of the aromatic ring of homogentisate to yield maleylacetoacetate. This Rhodopseudomonas palustris (strain BisA53) protein is Homogentisate 1,2-dioxygenase.